The chain runs to 579 residues: Nuclear hormone receptor family member nhr-71 (579 aa).

A DNA-binding region (nuclear receptor) is located at residues 8-83 (SQECMVCSAP…AGMKIGAVQP (76 aa)). 2 NR C4-type zinc fingers span residues 11–31 (CMVCSAPADGLHYGAISCRSC) and 47–71 (CKHTNTCLIDPDGRCACRSCRFTKC). Disordered stretches follow at residues 82 to 124 (QPRR…SDGP) and 168 to 189 (EPIPSTSSAPEKQSCQSSPNDD). 2 stretches are compositionally biased toward polar residues: residues 106 to 124 (SMNNSPLERNGNSFSSDGP) and 171 to 186 (PSTSSAPEKQSCQSSP). In terms of domain architecture, NR LBD spans 189-452 (DEQQEFNHLV…KFWYETLCYA (264 aa)).

It belongs to the nuclear hormone receptor family.

It is found in the nucleus. Its function is as follows. Orphan nuclear receptor. The polypeptide is Nuclear hormone receptor family member nhr-71 (nhr-71) (Caenorhabditis elegans).